Here is an 892-residue protein sequence, read N- to C-terminus: Putative leucine-rich repeat receptor-like serine/threonine-protein kinase At2g04300 (892 aa).

An N-terminal signal peptide occupies residues 1 to 26 (MKTHPQAILLCVLFFITFGLLHVVEA). Over 27–523 (GNQEGFISLD…GAKKKNVVVL (497 aa)) the chain is Extracellular. Asn-99, Asn-186, Asn-241, Asn-267, and Asn-294 each carry an N-linked (GlcNAc...) asparagine glycan. LRR repeat units lie at residues 375 to 396 (IKNI…PCVP), 399 to 422 (FMWD…FLNL), 423 to 444 (SSSH…LQNL), and 447 to 467 (SNNN…SLLV). N-linked (GlcNAc...) asparagine glycans are attached at residues Asn-407, Asn-421, Asn-437, Asn-450, and Asn-469. A helical transmembrane segment spans residues 524 to 544 (VVVSIALVVVLGSALALFLVF). Residues 545-892 (RKRKTPRNEV…FGTEYTPEAR (348 aa)) are Cytoplasmic-facing. A Phosphothreonine modification is found at Thr-573. A Protein kinase domain is found at 582–855 (NNFEKILGKG…QVVIELNECL (274 aa)). ATP contacts are provided by residues 588–596 (LGKGGFGMV) and Lys-610. Tyr-655 bears the Phosphotyrosine mark. The active-site Proton acceptor is the Asp-707. Residues Thr-742 and Thr-747 each carry the phosphothreonine modification. Tyr-755 is modified (phosphotyrosine).

It belongs to the protein kinase superfamily. Ser/Thr protein kinase family.

It is found in the cell membrane. The enzyme catalyses L-seryl-[protein] + ATP = O-phospho-L-seryl-[protein] + ADP + H(+). It catalyses the reaction L-threonyl-[protein] + ATP = O-phospho-L-threonyl-[protein] + ADP + H(+). This Arabidopsis thaliana (Mouse-ear cress) protein is Putative leucine-rich repeat receptor-like serine/threonine-protein kinase At2g04300.